Consider the following 759-residue polypeptide: MAGLTLFVGRLPPSARSEQLEELFSQVGPVKQCFVVTEKGSKACRGFGYVTFSMLEDVQRALKEITTFEGCKINVTVAKKKLRNKTKEKGKNENSECPKKEPKAKKAKVADKKARLIIRNLSFKCSEDDLKTVFAQFGAVLEVNIPRKPDGKMRGFGFVQFKNLLEAGKALKGMNMKEIKGRTVAVDWAVAKDKYKDTQSVSAIGEEKSHESKHQESVKKKGREEEDMEEEENDDDDDDDDEEDGVFDDEDEEEENIESKVTKPVQIQKRAVKRPAPAKSSDHSEEDSDLEESDSIDDGEELAQSDTSTEEQEDKAVQVSNKKKRKLPSDVNEGKTVFIRNLSFDSEEEELGELLQQFGELKYVRIVLHPDTEHSKGCAFAQFMTQEAAQKCLLAASPENEAGGLKLDGRQLKVDLAVTRDEAAKLQTTKVKKPTGTRNLYLAREGLIRAGTKAAEGVSAADMAKRERFELLKHQKLKDQNIFVSRTRLCLHNLPKAVDDKQLRKLLLSATSGEKGVRIKECRVMRDLKGVHGNMKGQSLGYAFAEFQEHEHALKALRLINNNPEIFGPLKRPIVEFSLEDRRKLKMKELRIQRSLQKMRSKPATGEPQKGQPEPAKDQQQKAAQHHTEEQSKVPPEQKRKAGSTSWTGFQTKAEVEQVELPDGKKRRKVLALPSHRGPKIRLRDKGKVKPVHPKKPKPQINQWKQEKQQLSSEQVSRKKAKGNKTETRFNQLVEQYKQKLLGPSKGAPLAKRSKWFDS.

Alanine 2 is modified (N-acetylalanine). The RRM 1 domain occupies 4–80 (LTLFVGRLPP…CKINVTVAKK (77 aa)). The disordered stretch occupies residues 84-105 (NKTKEKGKNENSECPKKEPKAK). The segment covering 85–101 (KTKEKGKNENSECPKKE) has biased composition (basic and acidic residues). An RRM 2 domain is found at 114-191 (ARLIIRNLSF…RTVAVDWAVA (78 aa)). Serine 122 carries the phosphoserine modification. Positions 201 to 330 (VSAIGEEKSH…NKKKRKLPSD (130 aa)) are disordered. The segment covering 205 to 224 (GEEKSHESKHQESVKKKGRE) has biased composition (basic and acidic residues). Acidic residues-rich tracts occupy residues 225–256 (EEDMEEEENDDDDDDDDEEDGVFDDEDEEEEN) and 284–313 (SEEDSDLEESDSIDDGEELAQSDTSTEEQE). RRM domains are found at residues 335 to 419 (KTVF…LAVT) and 487 to 597 (TRLC…RSLQ). Serine 397 is subject to Phosphoserine. The interval 594-759 (RSLQKMRSKP…LAKRSKWFDS (166 aa)) is disordered. Residues 615–640 (PAKDQQQKAAQHHTEEQSKVPPEQKR) show a composition bias toward basic and acidic residues. Residue lysine 653 forms a Glycyl lysine isopeptide (Lys-Gly) (interchain with G-Cter in SUMO2) linkage. Residues 689-698 (VKPVHPKKPK) show a composition bias toward basic residues. Residues 700–715 (QINQWKQEKQQLSSEQ) are compositionally biased toward polar residues.

Interacts with U1, U2, U4, U5, and U6 spliceosomal small nuclear RNAs (snRNAs). As to expression, ubiquitously expressed.

It is found in the nucleus. It localises to the nucleolus. Nucleolar component of the spliceosomal ribonucleoprotein complexes. The protein is RNA-binding protein 28 (RBM28) of Homo sapiens (Human).